A 267-amino-acid chain; its full sequence is 4-hydroxy-tetrahydrodipicolinate reductase (267 aa).

NAD(+) contacts are provided by residues 8-13 (GAAGRM) and glutamate 34. Arginine 35 serves as a coordination point for NADP(+). NAD(+) contacts are provided by residues 98-100 (GST) and 122-125 (APNM). Histidine 155 (proton donor/acceptor) is an active-site residue. Histidine 156 contributes to the (S)-2,3,4,5-tetrahydrodipicolinate binding site. Residue lysine 159 is the Proton donor of the active site. (S)-2,3,4,5-tetrahydrodipicolinate is bound at residue 165–166 (GT).

Belongs to the DapB family.

Its subcellular location is the cytoplasm. It carries out the reaction (S)-2,3,4,5-tetrahydrodipicolinate + NAD(+) + H2O = (2S,4S)-4-hydroxy-2,3,4,5-tetrahydrodipicolinate + NADH + H(+). The enzyme catalyses (S)-2,3,4,5-tetrahydrodipicolinate + NADP(+) + H2O = (2S,4S)-4-hydroxy-2,3,4,5-tetrahydrodipicolinate + NADPH + H(+). It participates in amino-acid biosynthesis; L-lysine biosynthesis via DAP pathway; (S)-tetrahydrodipicolinate from L-aspartate: step 4/4. Its function is as follows. Catalyzes the conversion of 4-hydroxy-tetrahydrodipicolinate (HTPA) to tetrahydrodipicolinate. In Geotalea daltonii (strain DSM 22248 / JCM 15807 / FRC-32) (Geobacter daltonii), this protein is 4-hydroxy-tetrahydrodipicolinate reductase.